A 226-amino-acid chain; its full sequence is Leucyl/phenylalanyl-tRNA--protein transferase (226 aa).

Belongs to the L/F-transferase family.

The protein resides in the cytoplasm. It carries out the reaction N-terminal L-lysyl-[protein] + L-leucyl-tRNA(Leu) = N-terminal L-leucyl-L-lysyl-[protein] + tRNA(Leu) + H(+). The enzyme catalyses N-terminal L-arginyl-[protein] + L-leucyl-tRNA(Leu) = N-terminal L-leucyl-L-arginyl-[protein] + tRNA(Leu) + H(+). The catalysed reaction is L-phenylalanyl-tRNA(Phe) + an N-terminal L-alpha-aminoacyl-[protein] = an N-terminal L-phenylalanyl-L-alpha-aminoacyl-[protein] + tRNA(Phe). Functionally, functions in the N-end rule pathway of protein degradation where it conjugates Leu, Phe and, less efficiently, Met from aminoacyl-tRNAs to the N-termini of proteins containing an N-terminal arginine or lysine. This chain is Leucyl/phenylalanyl-tRNA--protein transferase, found in Pseudomonas fluorescens (strain ATCC BAA-477 / NRRL B-23932 / Pf-5).